Reading from the N-terminus, the 185-residue chain is Elongation factor P (185 aa).

Belongs to the elongation factor P family.

The protein resides in the cytoplasm. It functions in the pathway protein biosynthesis; polypeptide chain elongation. Involved in peptide bond synthesis. Stimulates efficient translation and peptide-bond synthesis on native or reconstituted 70S ribosomes in vitro. Probably functions indirectly by altering the affinity of the ribosome for aminoacyl-tRNA, thus increasing their reactivity as acceptors for peptidyl transferase. The sequence is that of Elongation factor P from Mesomycoplasma hyopneumoniae (strain 232) (Mycoplasma hyopneumoniae).